The chain runs to 127 residues: Alkaline proteinase inhibitor (127 aa).

The signal sequence occupies residues 1–26 (MNINYFVRIVPVAVVLLVGISGASMA). Cys-53 and Cys-70 are oxidised to a cystine.

It belongs to the protease inhibitor I38 family.

It is found in the periplasm. Its function is as follows. Inhibitor of the alkaline protease. This Pseudomonas syringae pv. tomato (strain ATCC BAA-871 / DC3000) protein is Alkaline proteinase inhibitor (inh).